A 94-amino-acid polypeptide reads, in one-letter code: MLKPLGDRVILQQQEEEEQTIGGIVIANNAKEKPQSGKVVAVNDGRVLDNGTKVDPSVKVGDQVLFDKYAGTEVKYQGAKYLVLHEKDIVAIED.

It belongs to the GroES chaperonin family. In terms of assembly, heptamer of 7 subunits arranged in a ring. Interacts with the chaperonin GroEL.

It localises to the cytoplasm. In terms of biological role, together with the chaperonin GroEL, plays an essential role in assisting protein folding. The GroEL-GroES system forms a nano-cage that allows encapsulation of the non-native substrate proteins and provides a physical environment optimized to promote and accelerate protein folding. GroES binds to the apical surface of the GroEL ring, thereby capping the opening of the GroEL channel. This is Co-chaperonin GroES from Lactiplantibacillus plantarum (strain ATCC BAA-793 / NCIMB 8826 / WCFS1) (Lactobacillus plantarum).